The primary structure comprises 214 residues: Adenylate kinase (214 aa).

Residue 10 to 15 (GAGKGT) participates in ATP binding. The interval 30–59 (STGDMLRAAIKAGTELGNAAKRVMDEGKLV) is NMP. Residues T31, R36, 57–59 (KLV), 85–88 (GFPR), and Q92 contribute to the AMP site. Positions 122-159 (GRRVHPASGRVYHLQYNPPQNDGKDDETGEDLVIRADD) are LID. Residues R123 and 132–133 (VY) each bind ATP. AMP is bound by residues R156 and R167. K200 serves as a coordination point for ATP.

The protein belongs to the adenylate kinase family. Monomer.

Its subcellular location is the cytoplasm. The enzyme catalyses AMP + ATP = 2 ADP. It participates in purine metabolism; AMP biosynthesis via salvage pathway; AMP from ADP: step 1/1. Functionally, catalyzes the reversible transfer of the terminal phosphate group between ATP and AMP. Plays an important role in cellular energy homeostasis and in adenine nucleotide metabolism. The protein is Adenylate kinase of Pseudoalteromonas atlantica (strain T6c / ATCC BAA-1087).